Reading from the N-terminus, the 214-residue chain is Coiled-coil domain-containing protein 169 (214 aa).

A coiled-coil region spans residues 30–144 (EMLQMSTFEL…IEQEAKAYYK (115 aa)). A disordered region spans residues 161 to 214 (VTQEAAKKQQSDPAHATREKPAFKAKYNGLAKRRTMTKRRGGMTKGSHPSNMKH). Residues 165–182 (AAKKQQSDPAHATREKPA) are compositionally biased toward basic and acidic residues. Residues 191–202 (AKRRTMTKRRGG) are compositionally biased toward basic residues.

This sequence belongs to the CCDC169 family.

The polypeptide is Coiled-coil domain-containing protein 169 (ccdc169) (Xenopus laevis (African clawed frog)).